A 332-amino-acid chain; its full sequence is F-box/SPRY domain-containing protein 1 (332 aa).

Acidic residues predominate over residues 1–10 (MTENNEETIV). A disordered region spans residues 1–81 (MTENNEETIV…RRSPRRPEVS (81 aa)). Over residues 15 to 24 (CNLTSSTPMK) the composition is skewed to polar residues. The F-box domain occupies 79 to 127 (EVSASRLPLKVLNQIFQYLSLKDLRSAMLTCHSWNNALSMEDSDIWQQL). A B30.2/SPRY domain is found at 138–330 (SDPFLFVELR…VTMVYVGSPQ (193 aa)).

Belongs to the FBXO45/Fsn family. In terms of assembly, component of an SCF (SKP1-CUL1-F-box protein) E3 ubiquitin ligase complex composed of cul-1, fsn-1, rpm-1 and skr-1. Interacts (via SPRY domain) with scd-2 (via cytoplasmic domain). Interacts (via SPRY domain) with convertase egl-3 (via C-terminus).

The protein localises to the synapse. It functions in the pathway protein modification; protein ubiquitination. In terms of biological role, component of a SCF (SKP1-CUL1-F-box protein) E3 ubiquitin ligase complex which is required for the restriction and/or maturation of synapses in GABAergic neuromuscular junction (NMJ) presynaptic neurons. Promotes NRJ synapse development and synaptic transmission by negatively regulating the daf-2/InsR pathway in muscles. By targeting convertase egl-3 for degradation, negatively modulates insulin-like protein ins-4 and ins-6 processing. May stabilize synapse formation by promoting the down-regulation of scd-2. Regulates axon termination in PLM and ALM neurons. The sequence is that of F-box/SPRY domain-containing protein 1 (fsn-1) from Caenorhabditis briggsae.